The primary structure comprises 137 residues: Large ribosomal subunit protein uL16 (137 aa).

Belongs to the universal ribosomal protein uL16 family. As to quaternary structure, part of the 50S ribosomal subunit.

Its function is as follows. Binds 23S rRNA and is also seen to make contacts with the A and possibly P site tRNAs. In Ruegeria sp. (strain TM1040) (Silicibacter sp.), this protein is Large ribosomal subunit protein uL16.